The chain runs to 387 residues: MDLFEYQARDLFESYGVPVLPGIVADTAEEVRAAAEKLGGTVVVKAQVKTGGRGKAGGVKVAQSADAAFEAAEGILGLDIKGHTVHRVMVAAGARIAQEFYFSILLDRAERSYLCLASYEGGMEIEELAVTRPEALARIEIDPVAGIDAAKAEEIARAASFPEELIAKVAPVFERLWWVYRDEDATLVEVNPLVLTESGEIIALDGKVTLDENAGLRHEGHAALEDAAAADPLEAKAKESDLNYVKLDGQVGIIGNGAGLVMSTLDVVSYAGEQHGGVRPANFLDIGGGASAEVMAAGLDVILGDEQVTSVFVNVFGGITSCDAVANGIVGALDKLGDAATKPLVVRLDGNNVEEGRRILEERAHPLVTVVGTMDEAADKAAELAAA.

The region spanning 9–236 is the ATP-grasp domain; that stretch reads RDLFESYGVP…AAAADPLEAK (228 aa). ATP contacts are provided by residues K45, 52-54, A94, and E99; that span reads GRG. Positions 191 and 205 each coordinate Mg(2+). Residues N256 and 318–320 contribute to the substrate site; that span reads GIT.

Belongs to the succinate/malate CoA ligase beta subunit family. Heterotetramer of two alpha and two beta subunits. It depends on Mg(2+) as a cofactor.

The catalysed reaction is succinate + ATP + CoA = succinyl-CoA + ADP + phosphate. It carries out the reaction GTP + succinate + CoA = succinyl-CoA + GDP + phosphate. Its pathway is carbohydrate metabolism; tricarboxylic acid cycle; succinate from succinyl-CoA (ligase route): step 1/1. Succinyl-CoA synthetase functions in the citric acid cycle (TCA), coupling the hydrolysis of succinyl-CoA to the synthesis of either ATP or GTP and thus represents the only step of substrate-level phosphorylation in the TCA. The beta subunit provides nucleotide specificity of the enzyme and binds the substrate succinate, while the binding sites for coenzyme A and phosphate are found in the alpha subunit. This is Succinate--CoA ligase [ADP-forming] subunit beta from Clavibacter michiganensis subsp. michiganensis (strain NCPPB 382).